A 219-amino-acid polypeptide reads, in one-letter code: Poxin (219 aa).

His-17 (proton donor) is an active-site residue. Tyr-138 functions as the Shared with catalytic histidine of dimeric partner in the catalytic mechanism. The active-site Proton acceptor; shared with catalytic histidine of dimeric partner is Lys-142.

The protein belongs to the poxin family. In terms of assembly, homodimer.

The enzyme catalyses 2',3'-cGAMP + H2O = Gp(2'-5')Ap(3') + H(+). In terms of biological role, nuclease that is responsible for viral evasion of host cGAS-STING innate immunity. Cleaves 2',3'-cGAMP which is produced by host cGAS following recognition of cytosolic DNA and blocks the subsequent 2',3'-cGAMP-mediated activation of TMEM173/STING, which normally spreads to adjacent cells and activates the interferon and NF-kappa-B immune responses. The protein is Poxin (OPG188) of Bos taurus (Bovine).